The primary structure comprises 310 residues: Methionyl-tRNA formyltransferase (310 aa).

S110–P113 serves as a coordination point for (6S)-5,6,7,8-tetrahydrofolate.

Belongs to the Fmt family.

The enzyme catalyses L-methionyl-tRNA(fMet) + (6R)-10-formyltetrahydrofolate = N-formyl-L-methionyl-tRNA(fMet) + (6S)-5,6,7,8-tetrahydrofolate + H(+). Attaches a formyl group to the free amino group of methionyl-tRNA(fMet). The formyl group appears to play a dual role in the initiator identity of N-formylmethionyl-tRNA by promoting its recognition by IF2 and preventing the misappropriation of this tRNA by the elongation apparatus. The sequence is that of Methionyl-tRNA formyltransferase from Streptomyces coelicolor (strain ATCC BAA-471 / A3(2) / M145).